The primary structure comprises 78 residues: Conotoxin Cl11.1 (78 aa).

Positions 1–19 are cleaved as a signal peptide; the sequence is MKLALTFLLILMILPLTTG. Positions 20 to 33 are excised as a propeptide; it reads GKKSDNQALKRLGA. Disulfide bonds link cysteine 47–cysteine 61, cysteine 54–cysteine 66, cysteine 60–cysteine 70, and cysteine 65–cysteine 77.

It belongs to the conotoxin I1 superfamily. As to expression, expressed by the venom duct.

It localises to the secreted. This is Conotoxin Cl11.1 from Californiconus californicus (California cone).